A 98-amino-acid polypeptide reads, in one-letter code: Parvalbumin beta 1 (98 aa).

An N-acetylserine modification is found at serine 1. 2 EF-hand domains span residues 32-67 (KIGL…FSAG) and 67-98 (GARA…MIKG). Aspartate 45, aspartate 47, serine 49, phenylalanine 51, glutamate 53, glutamate 56, aspartate 80, aspartate 82, aspartate 84, lysine 86, and glutamate 91 together coordinate Ca(2+).

It belongs to the parvalbumin family.

Functionally, in muscle, parvalbumin is thought to be involved in relaxation after contraction. It binds two calcium ions. The polypeptide is Parvalbumin beta 1 (Macruronus magellanicus (Patagonian grenadier)).